Reading from the N-terminus, the 1029-residue chain is mRNA 3'-end-processing protein rna14 (1029 aa).

2 disordered regions span residues M1 to S177 and G225 to R251. Basic and acidic residues predominate over residues V21–D32. Polar residues-rich tracts occupy residues K43–Q79 and T104–T119. The segment covering V127–Y140 has biased composition (acidic residues). The span at T153 to D175 shows a compositional bias: polar residues. The segment covering D229–S243 has biased composition (low complexity). 6 HAT repeats span residues N281 to E313, N315 to R346, Q357 to S392, Q406 to G439, I469 to G509, and A521 to L553. Disordered regions lie at residues T634 to K664, T853 to A951, and I996 to L1023. The segment covering S894 to R908 has biased composition (basic and acidic residues). 2 stretches are compositionally biased toward polar residues: residues R932–S949 and G1006–L1023.

It localises to the nucleus. It is found in the cytoplasm. Component of the cleavage factor IA (CFIA) complex, which is involved in the endonucleolytic cleavage during polyadenylation-dependent pre-mRNA 3'-end formation. The sequence is that of mRNA 3'-end-processing protein rna14 (rna14) from Aspergillus fumigatus (strain ATCC MYA-4609 / CBS 101355 / FGSC A1100 / Af293) (Neosartorya fumigata).